A 183-amino-acid polypeptide reads, in one-letter code: DNA-directed RNA polymerase subunit Rpo7 (183 aa).

The S1 motif domain maps to 82-164; that stretch reads HEVIEGEVSQ…RLPRIALTMK (83 aa).

It belongs to the eukaryotic RPB7/RPC8 RNA polymerase subunit family. Part of the 13-subunit RNA polymerase complex. Forms a stalk with Rpo4 that extends from the main structure.

The protein resides in the cytoplasm. It carries out the reaction RNA(n) + a ribonucleoside 5'-triphosphate = RNA(n+1) + diphosphate. Functionally, DNA-dependent RNA polymerase (RNAP) catalyzes the transcription of DNA into RNA using the four ribonucleoside triphosphates as substrates. In terms of biological role, reconstitution experiments show this subunit is required for basic activity. The chain is DNA-directed RNA polymerase subunit Rpo7 from Sulfolobus acidocaldarius (strain ATCC 33909 / DSM 639 / JCM 8929 / NBRC 15157 / NCIMB 11770).